A 484-amino-acid chain; its full sequence is Probable protein disulfide-isomerase ER-60 (484 aa).

A signal peptide spans 1 to 14 (MRWLLSCLFLVAFA). Thioredoxin domains follow at residues 15 to 125 (SCSK…SRAG) and 338 to 467 (FEDG…REAT). Catalysis depends on nucleophile residues Cys-46, Cys-49, Cys-388, and Cys-391. Disulfide bonds link Cys-46–Cys-49 and Cys-388–Cys-391. A Prevents secretion from ER motif is present at residues 481–484 (KSEL).

It belongs to the protein disulfide isomerase family.

The protein localises to the endoplasmic reticulum lumen. It carries out the reaction Catalyzes the rearrangement of -S-S- bonds in proteins.. The polypeptide is Probable protein disulfide-isomerase ER-60 (Schistosoma mansoni (Blood fluke)).